Here is a 126-residue protein sequence, read N- to C-terminus: Fluoride-specific ion channel FluC (126 aa).

Helical transmembrane passes span 7 to 27 (LWLA…VLLL), 36 to 56 (FPAA…LTLA), 74 to 94 (GVLG…GLLL), and 98 to 118 (GGLA…AAVA). Glycine 77 and threonine 80 together coordinate Na(+).

This sequence belongs to the fluoride channel Fluc/FEX (TC 1.A.43) family.

It localises to the cell membrane. The enzyme catalyses fluoride(in) = fluoride(out). With respect to regulation, na(+) is not transported, but it plays an essential structural role and its presence is essential for fluoride channel function. Its function is as follows. Fluoride-specific ion channel. Important for reducing fluoride concentration in the cell, thus reducing its toxicity. This is Fluoride-specific ion channel FluC from Deinococcus radiodurans (strain ATCC 13939 / DSM 20539 / JCM 16871 / CCUG 27074 / LMG 4051 / NBRC 15346 / NCIMB 9279 / VKM B-1422 / R1).